The following is a 124-amino-acid chain: Small ribosomal subunit protein uS12c (124 aa).

A disordered region spans residues 1-28 (MPTFQQLVRSARKPHAKKTKSPALQGCP). A compositionally biased stretch (basic residues) spans 10–20 (SARKPHAKKTK).

This sequence belongs to the universal ribosomal protein uS12 family. In terms of assembly, part of the 30S ribosomal subunit.

It localises to the plastid. Functionally, with S4 and S5 plays an important role in translational accuracy. Located at the interface of the 30S and 50S subunits. This chain is Small ribosomal subunit protein uS12c (rps12), found in Prototheca wickerhamii.